The chain runs to 347 residues: Mediator of RNA polymerase II transcription subunit 7 (347 aa).

2 disordered regions span residues 97–172 (GIER…TQTH) and 302–326 (VPVGARTGTTVGDRRVGVDGEGAEE). Composition is skewed to low complexity over residues 108–171 (STTT…STQT) and 302–312 (VPVGARTGTTV).

This sequence belongs to the Mediator complex subunit 7 family. As to quaternary structure, component of the Mediator complex.

Its subcellular location is the nucleus. Functionally, component of the Mediator complex, a coactivator involved in the regulated transcription of nearly all RNA polymerase II-dependent genes. Mediator functions as a bridge to convey information from gene-specific regulatory proteins to the basal RNA polymerase II transcription machinery. Mediator is recruited to promoters by direct interactions with regulatory proteins and serves as a scaffold for the assembly of a functional preinitiation complex with RNA polymerase II and the general transcription factors. This chain is Mediator of RNA polymerase II transcription subunit 7 (med-7), found in Neurospora crassa (strain ATCC 24698 / 74-OR23-1A / CBS 708.71 / DSM 1257 / FGSC 987).